Consider the following 231-residue polypeptide: Small ribosomal subunit protein uS3 (231 aa).

In terms of domain architecture, KH type-2 spans 39-107 (VREFLKEKLK…PAQINIAEVR (69 aa)).

This sequence belongs to the universal ribosomal protein uS3 family. As to quaternary structure, part of the 30S ribosomal subunit. Forms a tight complex with proteins S10 and S14.

Its function is as follows. Binds the lower part of the 30S subunit head. Binds mRNA in the 70S ribosome, positioning it for translation. This chain is Small ribosomal subunit protein uS3, found in Colwellia psychrerythraea (strain 34H / ATCC BAA-681) (Vibrio psychroerythus).